We begin with the raw amino-acid sequence, 278 residues long: 4-hydroxy-tetrahydrodipicolinate reductase (278 aa).

Residues 16-21 (GAGGRM) and E42 each bind NAD(+). NADP(+) is bound at residue R43. Residues 106-108 (GTT) and 130-133 (AGNY) contribute to the NAD(+) site. The active-site Proton donor/acceptor is H163. H164 serves as a coordination point for (S)-2,3,4,5-tetrahydrodipicolinate. K167 functions as the Proton donor in the catalytic mechanism. 173–174 (GT) lines the (S)-2,3,4,5-tetrahydrodipicolinate pocket.

The protein belongs to the DapB family.

It is found in the cytoplasm. It catalyses the reaction (S)-2,3,4,5-tetrahydrodipicolinate + NAD(+) + H2O = (2S,4S)-4-hydroxy-2,3,4,5-tetrahydrodipicolinate + NADH + H(+). The enzyme catalyses (S)-2,3,4,5-tetrahydrodipicolinate + NADP(+) + H2O = (2S,4S)-4-hydroxy-2,3,4,5-tetrahydrodipicolinate + NADPH + H(+). Its pathway is amino-acid biosynthesis; L-lysine biosynthesis via DAP pathway; (S)-tetrahydrodipicolinate from L-aspartate: step 4/4. Its function is as follows. Catalyzes the conversion of 4-hydroxy-tetrahydrodipicolinate (HTPA) to tetrahydrodipicolinate. In Psychrobacter arcticus (strain DSM 17307 / VKM B-2377 / 273-4), this protein is 4-hydroxy-tetrahydrodipicolinate reductase.